We begin with the raw amino-acid sequence, 523 residues long: 2-isopropylmalate synthase (523 aa).

The Pyruvate carboxyltransferase domain maps to 5 to 267 (VIIFDTTLRD…ETGINAKEIH (263 aa)). Mn(2+)-binding residues include Asp-14, His-202, His-204, and Asn-238. Positions 392–523 (KLQQLVVHSD…QQEKQVLGGV (132 aa)) are regulatory domain.

The protein belongs to the alpha-IPM synthase/homocitrate synthase family. LeuA type 1 subfamily. Homodimer. Mn(2+) is required as a cofactor.

The protein resides in the cytoplasm. It carries out the reaction 3-methyl-2-oxobutanoate + acetyl-CoA + H2O = (2S)-2-isopropylmalate + CoA + H(+). It participates in amino-acid biosynthesis; L-leucine biosynthesis; L-leucine from 3-methyl-2-oxobutanoate: step 1/4. Functionally, catalyzes the condensation of the acetyl group of acetyl-CoA with 3-methyl-2-oxobutanoate (2-ketoisovalerate) to form 3-carboxy-3-hydroxy-4-methylpentanoate (2-isopropylmalate). This is 2-isopropylmalate synthase from Shewanella piezotolerans (strain WP3 / JCM 13877).